We begin with the raw amino-acid sequence, 248 residues long: NADP-dependent 3-hydroxy acid dehydrogenase YdfG (248 aa).

NADP(+) contacts are provided by residues 7–12 (GATAGF), 32–33 (RR), 54–55 (DV), and Asn81. Ser134 is a binding site for substrate. NADP(+)-binding positions include Tyr147, Lys151, and 177-185 (PGLVGGTEF). The active-site Proton acceptor is the Tyr147.

This sequence belongs to the short-chain dehydrogenases/reductases (SDR) family. In terms of assembly, homotetramer.

It carries out the reaction 3-hydroxypropanoate + NADP(+) = 3-oxopropanoate + NADPH + H(+). The catalysed reaction is L-allo-threonine + NADP(+) = aminoacetone + CO2 + NADPH. In terms of biological role, NADP-dependent dehydrogenase with broad substrate specificity acting on 3-hydroxy acids. Catalyzes the NADP-dependent oxidation of L-allo-threonine to L-2-amino-3-keto-butyrate, which is spontaneously decarboxylated into aminoacetone. Also acts on D-threonine, L-serine, D-serine, D-3-hydroxyisobutyrate, L-3-hydroxyisobutyrate, D-glycerate and L-glycerate. Able to catalyze the reduction of the malonic semialdehyde to 3-hydroxypropionic acid. YdfG is apparently supplementing RutE, the presumed malonic semialdehyde reductase involved in pyrimidine degradation since both are able to detoxify malonic semialdehyde. The sequence is that of NADP-dependent 3-hydroxy acid dehydrogenase YdfG from Shigella flexneri.